Here is a 419-residue protein sequence, read N- to C-terminus: L-rhamnose isomerase (419 aa).

His262, Asp294, and Asp296 together coordinate Mn(2+).

This sequence belongs to the rhamnose isomerase family. In terms of assembly, homotetramer. It depends on Mn(2+) as a cofactor.

It localises to the cytoplasm. It catalyses the reaction L-rhamnopyranose = L-rhamnulose. It functions in the pathway carbohydrate degradation; L-rhamnose degradation; glycerone phosphate from L-rhamnose: step 1/3. In terms of biological role, catalyzes the interconversion of L-rhamnose and L-rhamnulose. This is L-rhamnose isomerase from Citrobacter koseri (strain ATCC BAA-895 / CDC 4225-83 / SGSC4696).